Reading from the N-terminus, the 307-residue chain is Salivary glue protein Sgs-3 (307 aa).

The N-terminal stretch at 1-23 (MKLTIATALASILLIGSANVANC) is a signal peptide. The disordered stretch occupies residues 56 to 257 (APPTQQSTTQ…PTTTKPTTPK (202 aa)).

Post-translationally, O-glycosylated by Pgnat9 in salivary glands. Specifically expressed in the salivary gland.

The protein localises to the secreted. This Drosophila melanogaster (Fruit fly) protein is Salivary glue protein Sgs-3.